The chain runs to 117 residues: 3',5'-cyclic-AMP phosphodiesterase 4A (117 aa).

Positions 42–79 (KQNEVEIPSPTMKDREPQEAPRQRPCQQLPPPVPHLQP) are disordered. Residues 53–63 (MKDREPQEAPR) are compositionally biased toward basic and acidic residues. A catalytic region spans residues 78–117 (QPMSQITGVKRLSHNSGLNNASIPRFGVKTDQEELLAQEL).

It belongs to the cyclic nucleotide phosphodiesterase family. PDE4 subfamily. As to quaternary structure, interacts with LYN (via SH3 domain). Interacts with ARRB2. Requires Zn(2+) as cofactor. It depends on Mg(2+) as a cofactor. The cofactor is Mn(2+). In terms of processing, proteolytically cleaved by CASP3.

It is found in the cytoplasm. The protein resides in the cytosol. It localises to the membrane. The enzyme catalyses 3',5'-cyclic AMP + H2O = AMP + H(+). The protein operates within purine metabolism; 3',5'-cyclic AMP degradation; AMP from 3',5'-cyclic AMP: step 1/1. In terms of biological role, hydrolyzes the second messenger 3',5'-cyclic AMP (cAMP), which is a key regulator of many important physiological processes. The chain is 3',5'-cyclic-AMP phosphodiesterase 4A (PDE4A) from Cavia porcellus (Guinea pig).